The chain runs to 495 residues: Mothers against decapentaplegic homolog 6 (495 aa).

The span at methionine 1–arginine 15 shows a compositional bias: basic residues. Disordered stretches follow at residues methionine 1–leucine 115 and alanine 133–glutamate 161. 2 positions are modified to dimethylated arginine; alternate: arginine 74 and arginine 81. Arginine 74 and arginine 81 each carry omega-N-methylarginine; alternate. An MH1 domain is found at proline 149–proline 276. Lysine 174 is covalently cross-linked (Glycyl lysine isopeptide (Lys-Gly) (interchain with G-Cter in ubiquitin)). Zn(2+) contacts are provided by cysteine 206, cysteine 248, cysteine 261, and histidine 266. Residues tryptophan 332–arginine 495 enclose the MH2 domain. Serine 436 bears the Phosphoserine; by PRKX; in vitro mark.

This sequence belongs to the dwarfin/SMAD family. As to quaternary structure, interacts with NEDD4L. Interacts with WWP1. Interacts with STAMBP and PRKX. Interacts with RNF111 and AXIN1. Interacts with TGF-beta type I receptor superfamily members, including ACVR1B, BMPR1B and TGFBR1. In response to BMP2 treatment, interacts with SMAD1; this interaction may inhibit SMAD1-binding to SMAD4. Interacts with HOXC8 and HOXC9. Interacts with PELI1; this interaction interferes with PELI1 complex formation with TRAF6, IRAK1, IRAK4 and MYD88 in response to IL1B and hence negatively regulates IL1R-TLR signaling. Interacts with TSC22D1/TSC-22. Monoubiquitinated at Lys-174 by the E2/E3 hybrid ubiquitin-protein ligase UBE2O, leading to reduced binding affinity for the activated BMP type I receptor ACVR1/ALK2, thereby enhancing BMP7 and regulating adipocyte differentiation. Ubiquitinated by WWP1. Ubiquitinated by ARK2C, promoting proteasomal degradation, leading to enhance the BMP-Smad signaling. In terms of processing, arginine methylation by PRMT1, which is recruited by BMPR2, initiates BMP-Induced signaling and induces dissociation from the BMPR1B receptor at the cell surface leading to derepress downstream Smad1/Smad5 signaling. Post-translationally, phosphorylated by BMP type 1 receptor kinase and by PRKX. As to expression, ubiquitous in various organs, with higher levels in lung.

The protein localises to the nucleus. In terms of biological role, transforming growth factor-beta superfamily receptors signaling occurs through the Smad family of intracellular mediators. SMAD6 is an inhibitory Smad (i-Smad) that negatively regulates signaling downstream of type I transforming growth factor-beta. Acts as a mediator of TGF-beta and BMP anti-inflammatory activities. Suppresses IL1R-TLR signaling through its direct interaction with PEL1, preventing NF-kappa-B activation, nuclear transport and NF-kappa-B-mediated expression of pro-inflammatory genes. Blocks the BMP-SMAD1 signaling pathway by competing with SMAD4 for receptor-activated SMAD1-binding. Binds to regulatory elements in target promoter regions. This is Mothers against decapentaplegic homolog 6 (Smad6) from Mus musculus (Mouse).